A 258-amino-acid polypeptide reads, in one-letter code: Imidazole glycerol phosphate synthase subunit HisF (258 aa).

Active-site residues include Asp11 and Asp130.

This sequence belongs to the HisA/HisF family. As to quaternary structure, heterodimer of HisH and HisF.

The protein resides in the cytoplasm. It carries out the reaction 5-[(5-phospho-1-deoxy-D-ribulos-1-ylimino)methylamino]-1-(5-phospho-beta-D-ribosyl)imidazole-4-carboxamide + L-glutamine = D-erythro-1-(imidazol-4-yl)glycerol 3-phosphate + 5-amino-1-(5-phospho-beta-D-ribosyl)imidazole-4-carboxamide + L-glutamate + H(+). It functions in the pathway amino-acid biosynthesis; L-histidine biosynthesis; L-histidine from 5-phospho-alpha-D-ribose 1-diphosphate: step 5/9. IGPS catalyzes the conversion of PRFAR and glutamine to IGP, AICAR and glutamate. The HisF subunit catalyzes the cyclization activity that produces IGP and AICAR from PRFAR using the ammonia provided by the HisH subunit. The protein is Imidazole glycerol phosphate synthase subunit HisF of Xanthomonas euvesicatoria pv. vesicatoria (strain 85-10) (Xanthomonas campestris pv. vesicatoria).